A 234-amino-acid chain; its full sequence is DNA repair protein RecO (234 aa).

Belongs to the RecO family.

Functionally, involved in DNA repair and RecF pathway recombination. The sequence is that of DNA repair protein RecO from Alteromonas mediterranea (strain DSM 17117 / CIP 110805 / LMG 28347 / Deep ecotype).